The chain runs to 382 residues: Alcohol dehydrogenase 4 (382 aa).

This sequence belongs to the iron-containing alcohol dehydrogenase family. Homodimer. Requires Zn(2+) as cofactor. Fe(2+) is required as a cofactor.

It is found in the mitochondrion. It catalyses the reaction a primary alcohol + NAD(+) = an aldehyde + NADH + H(+). It carries out the reaction a secondary alcohol + NAD(+) = a ketone + NADH + H(+). Its activity is regulated as follows. Inhibited by EDTA. Functionally, reduces acetaldehyde to ethanol during glucose fermentation. Specific for ethanol. Shows drastically reduced activity towards primary alcohols from 4 carbon atoms upward. Isomers of aliphatic alcohol, as well as secondary alcohols and glycerol are not used at all. The chain is Alcohol dehydrogenase 4 (ADH4) from Saccharomyces cerevisiae (strain YJM789) (Baker's yeast).